Consider the following 727-residue polypeptide: Catalase-peroxidase (727 aa).

A disordered region spans residues 1–24 (MDQKSDSAGKCPVAHTAPRGRSNR). The segment at residues 95 to 217 (WHSAGTYRIT…LAAVQMGLIY (123 aa)) is a cross-link (tryptophyl-tyrosyl-methioninium (Trp-Tyr) (with M-243)). His-96 serves as the catalytic Proton acceptor. Positions 217 to 243 (YVNPEGPNGNPDPVAAARDIRETFARM) form a cross-link, tryptophyl-tyrosyl-methioninium (Tyr-Met) (with W-95). His-258 is a heme b binding site.

The protein belongs to the peroxidase family. Peroxidase/catalase subfamily. In terms of assembly, homodimer or homotetramer. Requires heme b as cofactor. Post-translationally, formation of the three residue Trp-Tyr-Met cross-link is important for the catalase, but not the peroxidase activity of the enzyme.

It catalyses the reaction H2O2 + AH2 = A + 2 H2O. The catalysed reaction is 2 H2O2 = O2 + 2 H2O. Bifunctional enzyme with both catalase and broad-spectrum peroxidase activity. The polypeptide is Catalase-peroxidase (Rhizobium meliloti (strain 1021) (Ensifer meliloti)).